Consider the following 546-residue polypeptide: Beta-amylase (546 aa).

A signal peptide spans 1–30 (MKNQFQYCCIVILSVVMLFVSLLIPQASSA). A substrate-binding site is contributed by aspartate 79. Residues glutamate 86, aspartate 90, and glutamine 91 each contribute to the Ca(2+) site. Histidine 119 and aspartate 127 together coordinate substrate. Cysteines 121 and 129 form a disulfide. Residues glutamate 171 and glutamate 174 each coordinate Ca(2+). Residue glutamate 202 is the Proton donor of the active site. Positions 317, 322, and 360 each coordinate substrate. Catalysis depends on glutamate 397, which acts as the Proton acceptor. Substrate-binding positions include 398 to 399 (NA) and arginine 427. Positions 444–546 (LLGVTPVMQT…LKTTSHTSSW (103 aa)) constitute a CBM20 domain.

Belongs to the glycosyl hydrolase 14 family. As to quaternary structure, monomer. The cofactor is Ca(2+).

The enzyme catalyses Hydrolysis of (1-&gt;4)-alpha-D-glucosidic linkages in polysaccharides so as to remove successive maltose units from the non-reducing ends of the chains.. The sequence is that of Beta-amylase (spoII) from Bacillus cereus.